A 305-amino-acid polypeptide reads, in one-letter code: Homoserine kinase (305 aa).

Residue 90 to 100 (PLARGLGSSAS) participates in ATP binding.

This sequence belongs to the GHMP kinase family. Homoserine kinase subfamily.

The protein resides in the cytoplasm. The enzyme catalyses L-homoserine + ATP = O-phospho-L-homoserine + ADP + H(+). It functions in the pathway amino-acid biosynthesis; L-threonine biosynthesis; L-threonine from L-aspartate: step 4/5. Catalyzes the ATP-dependent phosphorylation of L-homoserine to L-homoserine phosphate. In Staphylococcus saprophyticus subsp. saprophyticus (strain ATCC 15305 / DSM 20229 / NCIMB 8711 / NCTC 7292 / S-41), this protein is Homoserine kinase.